The sequence spans 77 residues: Acyl carrier protein (77 aa).

The Carrier domain occupies 1–76; it reads MADFEKIKSI…DVIKFIDKLK (76 aa). Residue S36 is modified to O-(pantetheine 4'-phosphoryl)serine.

It belongs to the acyl carrier protein (ACP) family. In terms of processing, 4'-phosphopantetheine is transferred from CoA to a specific serine of apo-ACP by AcpS. This modification is essential for activity because fatty acids are bound in thioester linkage to the sulfhydryl of the prosthetic group.

Its subcellular location is the cytoplasm. Its pathway is lipid metabolism; fatty acid biosynthesis. Its function is as follows. Carrier of the growing fatty acid chain in fatty acid biosynthesis. This is Acyl carrier protein from Leptospira biflexa serovar Patoc (strain Patoc 1 / Ames).